The sequence spans 165 residues: Phosphopantetheine adenylyltransferase (165 aa).

Residue Thr-9 participates in substrate binding. Residues Thr-9–Phe-10 and His-17 each bind ATP. Substrate is bound by residues Lys-41, Leu-73, and Arg-87. Residues Gly-88–Arg-90, Glu-98, and Tyr-123–Thr-129 each bind ATP.

It belongs to the bacterial CoaD family. In terms of assembly, homohexamer. The cofactor is Mg(2+).

The protein resides in the cytoplasm. The catalysed reaction is (R)-4'-phosphopantetheine + ATP + H(+) = 3'-dephospho-CoA + diphosphate. It functions in the pathway cofactor biosynthesis; coenzyme A biosynthesis; CoA from (R)-pantothenate: step 4/5. Reversibly transfers an adenylyl group from ATP to 4'-phosphopantetheine, yielding dephospho-CoA (dPCoA) and pyrophosphate. In Burkholderia lata (strain ATCC 17760 / DSM 23089 / LMG 22485 / NCIMB 9086 / R18194 / 383), this protein is Phosphopantetheine adenylyltransferase.